Here is a 338-residue protein sequence, read N- to C-terminus: UPF0324 membrane protein NMA0465 (338 aa).

Helical transmembrane passes span 5-23, 33-55, 62-84, 94-116, 123-145, 155-177, 222-239, 254-273, 280-302, and 312-334; these read PFYFGLIFIAIIAILANYL, HISALIIAILLGMAIGNTIYPQF, GVLFAKGALLRTGIVLYGFRLTF, AVVTDAIMLISTFFFTVLLGIRY, LVYLTGAGCSICGAAAVMAAESV, VAIAIVVIFGTLAIFTYPLFYTW, IRVMMLAPFLLMLSWLLT, IPWFAVLFIGVAIFNSFDLL, LFVEIDSFLLISSMAALGLTTHA, and PFVLGILTYLWLVVGGFLVNYGI.

It belongs to the UPF0324 family.

It localises to the cell membrane. The chain is UPF0324 membrane protein NMA0465 from Neisseria meningitidis serogroup A / serotype 4A (strain DSM 15465 / Z2491).